Consider the following 388-residue polypeptide: Phosphoglycerate kinase (388 aa).

Residues 21-23 (DLN), Arg36, 59-62 (HLGR), Arg114, and Arg147 each bind substrate. ATP is bound by residues Lys198, Glu315, and 341-344 (GGDT).

This sequence belongs to the phosphoglycerate kinase family. In terms of assembly, monomer.

It is found in the cytoplasm. It carries out the reaction (2R)-3-phosphoglycerate + ATP = (2R)-3-phospho-glyceroyl phosphate + ADP. It participates in carbohydrate degradation; glycolysis; pyruvate from D-glyceraldehyde 3-phosphate: step 2/5. This Buchnera aphidicola subsp. Schizaphis graminum (strain Sg) protein is Phosphoglycerate kinase.